Reading from the N-terminus, the 392-residue chain is Formate-dependent phosphoribosylglycinamide formyltransferase (392 aa).

N(1)-(5-phospho-beta-D-ribosyl)glycinamide-binding positions include 22–23 (EL) and Glu82. ATP-binding positions include Arg114, Lys155, 160-165 (SSGKGQ), 195-198 (EGVV), and Glu203. Residues 119 to 308 (RLAAEELGLP…EFALHVRAFL (190 aa)) form the ATP-grasp domain. Mg(2+) contacts are provided by Glu267 and Glu279. Residues Asp286, Lys355, and 362 to 363 (RR) contribute to the N(1)-(5-phospho-beta-D-ribosyl)glycinamide site.

The protein belongs to the PurK/PurT family. In terms of assembly, homodimer.

The catalysed reaction is N(1)-(5-phospho-beta-D-ribosyl)glycinamide + formate + ATP = N(2)-formyl-N(1)-(5-phospho-beta-D-ribosyl)glycinamide + ADP + phosphate + H(+). It functions in the pathway purine metabolism; IMP biosynthesis via de novo pathway; N(2)-formyl-N(1)-(5-phospho-D-ribosyl)glycinamide from N(1)-(5-phospho-D-ribosyl)glycinamide (formate route): step 1/1. In terms of biological role, involved in the de novo purine biosynthesis. Catalyzes the transfer of formate to 5-phospho-ribosyl-glycinamide (GAR), producing 5-phospho-ribosyl-N-formylglycinamide (FGAR). Formate is provided by PurU via hydrolysis of 10-formyl-tetrahydrofolate. The sequence is that of Formate-dependent phosphoribosylglycinamide formyltransferase from Salmonella dublin (strain CT_02021853).